A 234-amino-acid polypeptide reads, in one-letter code: Leucyl/phenylalanyl-tRNA--protein transferase (234 aa).

It belongs to the L/F-transferase family.

Its subcellular location is the cytoplasm. It catalyses the reaction N-terminal L-lysyl-[protein] + L-leucyl-tRNA(Leu) = N-terminal L-leucyl-L-lysyl-[protein] + tRNA(Leu) + H(+). The enzyme catalyses N-terminal L-arginyl-[protein] + L-leucyl-tRNA(Leu) = N-terminal L-leucyl-L-arginyl-[protein] + tRNA(Leu) + H(+). The catalysed reaction is L-phenylalanyl-tRNA(Phe) + an N-terminal L-alpha-aminoacyl-[protein] = an N-terminal L-phenylalanyl-L-alpha-aminoacyl-[protein] + tRNA(Phe). Functions in the N-end rule pathway of protein degradation where it conjugates Leu, Phe and, less efficiently, Met from aminoacyl-tRNAs to the N-termini of proteins containing an N-terminal arginine or lysine. The chain is Leucyl/phenylalanyl-tRNA--protein transferase from Syntrophobacter fumaroxidans (strain DSM 10017 / MPOB).